The following is a 509-amino-acid chain: Activin receptor type-1 (509 aa).

An N-terminal signal peptide occupies residues 1–20; the sequence is MVDGAMILSVLMMMALPSPS. The Extracellular segment spans residues 21-123; that stretch reads MEDEEPKVNP…FPGSQNFHLE (103 aa). Asparagine 102 carries an N-linked (GlcNAc...) asparagine glycan. The chain crosses the membrane as a helical span at residues 124-146; it reads VGLIILSVVFAVCLFACILGVAL. Residues 147–509 lie on the Cytoplasmic side of the membrane; the sequence is RKFKRRNQER…NSLDKLKTDC (363 aa). Residues 178-207 enclose the GS domain; the sequence is STLAELLDHSCTSGSGSGLPFLVQRTVARQ. The Protein kinase domain occupies 208–502; the sequence is ITLLECVGKG…KTLTKIDNSL (295 aa). Residues 214–222 and lysine 235 contribute to the ATP site; that span reads VGKGRYGEV. Aspartate 336 serves as the catalytic Proton acceptor. Phosphoserine is present on serine 501.

The protein belongs to the protein kinase superfamily. TKL Ser/Thr protein kinase family. TGFB receptor subfamily. In terms of assembly, interacts with FKBP1A. Interacts with FCHO1. Interacts with CLU. Interacts with type II receptors AMHR2 and ACVR2A. Interacts with BMP7. Interacts with GDF2/BMP9. Interacts with BMP6 (when glycosylated); the interaction may induce HAMP expression. Interacts with TSC22D1/TSC-22. Mg(2+) is required as a cofactor. The cofactor is Mn(2+). Urogenital ridge, testis, ovary, brain and lungs.

The protein localises to the membrane. The enzyme catalyses L-threonyl-[receptor-protein] + ATP = O-phospho-L-threonyl-[receptor-protein] + ADP + H(+). It catalyses the reaction L-seryl-[receptor-protein] + ATP = O-phospho-L-seryl-[receptor-protein] + ADP + H(+). Bone morphogenetic protein (BMP) type I receptor that is involved in a wide variety of biological processes, including bone, heart, cartilage, nervous, and reproductive system development and regulation. As a type I receptor, forms heterotetrameric receptor complexes with the type II receptors AMHR2, ACVR2A ors ACVR2B. Upon binding of ligands such as BMP7 or GDF2/BMP9 to the heteromeric complexes, type II receptors transphosphorylate ACVR1 intracellular domain. In turn, ACVR1 kinase domain is activated and subsequently phosphorylates SMAD1/5/8 proteins that transduce the signal. In addition to its role in mediating BMP pathway-specific signaling, suppresses TGFbeta/activin pathway signaling by interfering with the binding of activin to its type II receptor. Besides canonical SMAD signaling, can activate non-canonical pathways such as p38 mitogen-activated protein kinases/MAPKs. May promote the expression of HAMP, potentially via its interaction with BMP6. The polypeptide is Activin receptor type-1 (Acvr1) (Rattus norvegicus (Rat)).